Here is a 310-residue protein sequence, read N- to C-terminus: MFTDCSSSTTSRLIHLYNRNGVFLPRPSVSQFSLRTTASTWRCTLSIRSSSSPSAIVIDGKAEAKKIRDDIKIEVSRMKESIGVVPAEDSSEEEVLKYVSGFNDDPSVHGVLVQLPLPSHMDEQNILNAVSIEKDVDGFHPLNIGRLAMRGREPLFVPCTPKGCIELLHRYNIEFKGKRAVVIGRSNIVGMPAALLLQKEDATVSIIHSRTMNPEELTRQADILISAVGKPNMVRGSWIKPGAVLIDVGIKPVEDPSAAGGERLVGDICYVEASKIASAITPVPGDVGPMTIAMLLSNTLTSAKRIHNFQ.

A chloroplast-targeting transit peptide spans 1–48 (MFTDCSSSTTSRLIHLYNRNGVFLPRPSVSQFSLRTTASTWRCTLSIR).

The protein belongs to the tetrahydrofolate dehydrogenase/cyclohydrolase family. As to quaternary structure, homodimer.

The protein localises to the plastid. Its subcellular location is the chloroplast. The enzyme catalyses (6R)-5,10-methylene-5,6,7,8-tetrahydrofolate + NADP(+) = (6R)-5,10-methenyltetrahydrofolate + NADPH. It catalyses the reaction (6R)-5,10-methenyltetrahydrofolate + H2O = (6R)-10-formyltetrahydrofolate + H(+). The protein operates within one-carbon metabolism; tetrahydrofolate interconversion. Catalyzes the oxidation of 5,10-methylenetetrahydrofolate to 5,10-methenyltetrahydrofolate and then the hydrolysis of 5,10-methenyltetrahydrofolate to 10-formyltetrahydrofolate. This is Bifunctional protein FolD 3, chloroplastic (FOLD3) from Arabidopsis thaliana (Mouse-ear cress).